The following is a 40-amino-acid chain: Potassium channel toxin alpha-KTx 12.3 (40 aa).

Cystine bridges form between cysteine 2–cysteine 5, cysteine 10–cysteine 31, cysteine 16–cysteine 36, and cysteine 20–cysteine 38.

In terms of tissue distribution, expressed by the venom gland.

The protein resides in the secreted. Functionally, inhibits high conductance calcium-activated potassium channels (KCNMA). Inhibits Shaker B potassium channels. This Tityus costatus (Brazilian scorpion) protein is Potassium channel toxin alpha-KTx 12.3.